The chain runs to 541 residues: RING finger protein 37 (541 aa).

Residues 258–338 (DVPEEFLDPI…DHFLLQHSIP (81 aa)) form the U-box domain. Residue Arg451 is modified to Asymmetric dimethylarginine. The RING-type zinc finger occupies 483–528 (CASCKRVFSPYFKKEPVYQLPCGHLLCRPCLGEKQRSLPMTCTACQ).

As to quaternary structure, interacts with UBE2L3. Interacts with VCP. As to expression, expressed in liver, heart, brain, kidney and testis.

It is found in the nucleus. The catalysed reaction is S-ubiquitinyl-[E2 ubiquitin-conjugating enzyme]-L-cysteine + [acceptor protein]-L-lysine = [E2 ubiquitin-conjugating enzyme]-L-cysteine + N(6)-ubiquitinyl-[acceptor protein]-L-lysine.. It participates in protein modification; protein ubiquitination. In terms of biological role, may have a ubiquitin-protein ligase activity acting as an E3 ubiquitin-protein ligase or as a ubiquitin-ubiquitin ligase promoting elongation of ubiquitin chains on substrates. This is RING finger protein 37 from Homo sapiens (Human).